The sequence spans 589 residues: UvrABC system protein C (589 aa).

Residues 13 to 90 (PNPGCYLFKN…IKTHTPKYNF (78 aa)) form the GIY-YIG domain. The 36-residue stretch at 194–229 (KDILKKLHHLMQKASEKMFYEKAQEYRDIIDSIKQT) folds into the UVR domain.

Belongs to the UvrC family. Interacts with UvrB in an incision complex.

Its subcellular location is the cytoplasm. Functionally, the UvrABC repair system catalyzes the recognition and processing of DNA lesions. UvrC both incises the 5' and 3' sides of the lesion. The N-terminal half is responsible for the 3' incision and the C-terminal half is responsible for the 5' incision. The chain is UvrABC system protein C from Aster yellows witches'-broom phytoplasma (strain AYWB).